The chain runs to 136 residues: Cell division protein SepF 3 (136 aa).

The protein belongs to the SepF family. In terms of assembly, homodimer. Interacts with FtsZ.

It localises to the cytoplasm. In terms of biological role, cell division protein that is part of the divisome complex and is recruited early to the Z-ring. Probably stimulates Z-ring formation, perhaps through the cross-linking of FtsZ protofilaments. Its function overlaps with FtsA. This is Cell division protein SepF 3 from Streptomyces coelicolor (strain ATCC BAA-471 / A3(2) / M145).